A 149-amino-acid polypeptide reads, in one-letter code: Transcription factor HY5-like (149 aa).

Residues 1-77 form a disordered region; it reads MSLQRPNGNS…RRRGRNPVDK (77 aa). Positions 23 to 36 are interaction with COP1; sequence ESDEELLMVPDMEA. Phosphoserine is present on Ser24. Over residues 55–64 the composition is skewed to polar residues; sequence ELDQTQNGVS. In terms of domain architecture, bZIP spans 78-141; it reads EYRSLKRLLR…TMLRKMLINT (64 aa). Residues 80–100 form a basic motif region; it reads RSLKRLLRNRVSAQQARERKK. The interval 106–134 is leucine-zipper; that stretch reads LESRANELQNNNDQLEEKISTLTNENTML.

This sequence belongs to the bZIP family. As to quaternary structure, heterodimer; heterodimerizes with HY5 via the leucine-zipper domains. Interacts with COP1 WD40 domain. Interacts with BBX24/STO and BBX25/STH. Post-translationally, ubiquitinated by COP1. Ubiquitination takes place in darkness and leads to its subsequent degradation, thereby preventing the activation of photomorphogenesis signals.

It localises to the nucleus. Transcription factor that promotes photomorphogenesis in light. Acts downstream of the light receptor network and directly affects transcription of light-induced genes. Specifically involved in the blue light specific pathway, suggesting that it participates in transmission of cryptochromes (CRY1 and CRY2) signals to downstream responses. In darkness, its degradation prevents the activation of light-induced genes. This Arabidopsis thaliana (Mouse-ear cress) protein is Transcription factor HY5-like (HYH).